We begin with the raw amino-acid sequence, 224 residues long: Imidazole glycerol phosphate synthase subunit HisH (224 aa).

The 210-residue stretch at 5-214 (DTIIIDTGCA…MKMNAGSFAG (210 aa)) folds into the Glutamine amidotransferase type-1 domain. Cys80 acts as the Nucleophile in catalysis. Active-site residues include His189 and Glu191.

In terms of assembly, heterodimer of HisH and HisF.

Its subcellular location is the cytoplasm. The catalysed reaction is 5-[(5-phospho-1-deoxy-D-ribulos-1-ylimino)methylamino]-1-(5-phospho-beta-D-ribosyl)imidazole-4-carboxamide + L-glutamine = D-erythro-1-(imidazol-4-yl)glycerol 3-phosphate + 5-amino-1-(5-phospho-beta-D-ribosyl)imidazole-4-carboxamide + L-glutamate + H(+). It catalyses the reaction L-glutamine + H2O = L-glutamate + NH4(+). It participates in amino-acid biosynthesis; L-histidine biosynthesis; L-histidine from 5-phospho-alpha-D-ribose 1-diphosphate: step 5/9. Functionally, IGPS catalyzes the conversion of PRFAR and glutamine to IGP, AICAR and glutamate. The HisH subunit catalyzes the hydrolysis of glutamine to glutamate and ammonia as part of the synthesis of IGP and AICAR. The resulting ammonia molecule is channeled to the active site of HisF. The protein is Imidazole glycerol phosphate synthase subunit HisH of Shewanella loihica (strain ATCC BAA-1088 / PV-4).